The chain runs to 341 residues: Phenylalanine--tRNA ligase alpha subunit (341 aa).

Glu-256 serves as a coordination point for Mg(2+).

The protein belongs to the class-II aminoacyl-tRNA synthetase family. Phe-tRNA synthetase alpha subunit type 1 subfamily. Tetramer of two alpha and two beta subunits. It depends on Mg(2+) as a cofactor.

It localises to the cytoplasm. It carries out the reaction tRNA(Phe) + L-phenylalanine + ATP = L-phenylalanyl-tRNA(Phe) + AMP + diphosphate + H(+). This Leptospira borgpetersenii serovar Hardjo-bovis (strain JB197) protein is Phenylalanine--tRNA ligase alpha subunit.